A 478-amino-acid chain; its full sequence is Antiviral innate immune response effector IFIT1 (478 aa).

TPR repeat units lie at residues 52–85 (VGIH…MQEE), 95–128 (LVTW…CKKL), 141–174 (IDCE…DPEN), 183–216 (ISAY…NPDN), 218–249 (YIKV…NMSS), and 251–284 (TYVF…TPTS). Tryptophan 147 contributes to the mRNA binding site. Glycine 190 is an RNA binding site. Positions 259, 289, 290, and 336 each coordinate RNA. TPR repeat units follow at residues 305-339 (ATKG…KPTF), 340-373 (EVAH…KPVV), 378-412 (QDIH…EQAS), and 437-470 (LESL…AADF).

This sequence belongs to the IFIT family. As to quaternary structure, component of an interferon-dependent multiprotein complex, at least composed of IFIT1, IFIT2 and IFIT3. Interacts (via TPR repeats 1-4) with RPL15. Interacts with STING1/MITA; could disrupt STING1 interaction with MAVS or TBK1, acting as a negative-feedback regulator of virus-triggered signaling. Interacts with EIF3E; this could be an alternative way to inhibit translation. Phosphorylated. In terms of processing, ISGylated.

Its subcellular location is the cytoplasm. Its function is as follows. Plays a key role in the innate immune response as part of an interferon-dependent multiprotein complex, recognizing and sequestering viral RNAs that lack host-specific 2'-O-methylation at their 5' cap. By distinguishing these RNAs from host mRNAs, inhibits their translation by competing with the translation initiation factor eIF4E. Could also prevent viral replication through its interaction with DNA replication origin-binding protein E1 of several viruses. Causes the translocation of E1 from the nucleus to the cytoplasm and can also inhibit its helicase activity in vitro. Exhibits antiviral activity against many viruses from the Flaviviridae (West Nile virus, Dengue virus, hepatitis C virus), Coronaviridae (human 229E coronavirus, SARS-CoV-2 and SARS-CoV), Poxviridae (vaccinia virus) and Togaviridae (Sindbis virus) families. The sequence is that of Antiviral innate immune response effector IFIT1 from Homo sapiens (Human).